We begin with the raw amino-acid sequence, 258 residues long: MGKKDKRWVLQRKNDHYYNLAKKRNYRSRATYKLFQLNEKFNLIKERNVVVDLGCAPGGWLQAARDIVGDKGFIVGIDLQTVKPLPYENVIAIKGDMTKEEILKQARDLLPEKPDVIICDASPNISGVWDVDHARSLELTTMALMTATKMLKKGGNFVVKVFQGDLFEKYVQLVSEYFDKAFTTKPRASRDESAEVYVIGKRFNGRKFDMNSKSPIVKLLDTNPKENEITSPSLRKDISKEDSGLMIKRIKEMRSKKE.

S-adenosyl-L-methionine is bound by residues G58, W60, D78, D96, and D120. Residue K160 is the Proton acceptor of the active site.

This sequence belongs to the class I-like SAM-binding methyltransferase superfamily. RNA methyltransferase RlmE family.

Its subcellular location is the cytoplasm. The catalysed reaction is uridine(2552) in 23S rRNA + S-adenosyl-L-methionine = 2'-O-methyluridine(2552) in 23S rRNA + S-adenosyl-L-homocysteine + H(+). Functionally, specifically methylates the uridine in position 2552 of 23S rRNA at the 2'-O position of the ribose in the fully assembled 50S ribosomal subunit. The protein is Ribosomal RNA large subunit methyltransferase E of Methanococcus maripaludis (strain C5 / ATCC BAA-1333).